The sequence spans 266 residues: RNA-binding protein 7 (266 aa).

Gly-2 bears the N-acetylglycine mark. The 78-residue stretch at 10 to 87 (RTLFVGNLET…RPIKIQFRSG (78 aa)) folds into the RRM domain. ZCCHC8 binding regions lie at residues 25–35 (LLFELFHQAGP) and 59–76 (HEVSVPYAMNLLNGIKLY). Polar residues predominate over residues 90 to 115 (HAPQDVSLSYPQHHVGNSSPTSTSPS). The segment at 90 to 118 (HAPQDVSLSYPQHHVGNSSPTSTSPSRYE) is disordered. Ser-136 and Ser-137 each carry phosphoserine. Arg-152 carries the omega-N-methylarginine modification. Positions 162–266 (SSPLDQSGFS…RDGKWRSSRH (105 aa)) are disordered. A compositionally biased stretch (low complexity) spans 173-188 (SVQSHSHSFNQSSSSQ). The residue at position 204 (Ser-204) is a Phosphoserine. The segment covering 209–266 (ADRHYSREQRYTDHGSDHHYRGKRDDFFYEDRNHDDWSHDYDNRRDSSRDGKWRSSRH) has biased composition (basic and acidic residues).

Component of the nuclear exosome targeting (NEXT) complex composed of MTREX, ZCCHC8, and RBM7 that directs a subset of non-coding short-lived RNAs for exosomal degradation. Interacts with ZCCHC8 and SF3B2/SAP145. Binds to MTREX through ZCCHC8. Interacts with YWHAE and YWHAZ; these interactions are stress-dependent and RBM7 phosphorylation dependent; release RNA from the NEXT complex and may affect RNA targeting to the nuclear RNA exosomome for degradation. Interacts with MEPCE and LARP7, the core subunits of 7SK snRNP; upon genotoxic stress this interaction is enhanced, triggering the release of inactive P-TEFb complex from the core and P-TEFb complex activation. In terms of processing, phosphorylated at Ser-136 by MAPK14/p38-alpha-activated MAPKAPK2/MK2; this phosphorylation is stress-dependent; this phosphorylation decreases its RNA-binding capacity therefore affecting RNA nuclear exosome-mediated degradation. This phosphorylation mediates YWHAE and YWHAZ interactions. Ubiquitous.

It is found in the nucleus. The protein localises to the nucleoplasm. RNA-binding subunit of the trimeric nuclear exosome targeting (NEXT) complex, a complex that functions as an RNA exosome cofactor that directs a subset of non-coding short-lived RNAs for exosomal degradation. NEXT is involved in surveillance and turnover of aberrant transcripts and non-coding RNAs. Binds preferentially polyuridine sequences and associates with newly synthesized RNAs, including pre-mRNAs and short-lived exosome substrates such as promoter upstream transcripts (PROMPTs), enhancer RNAs (eRNAs), and 3'-extended products from small nuclear RNAs (snRNAs). Participates in several biological processes including DNA damage response (DDR) and stress response. During stress response, activation of the p38MAPK-MK2 pathway decreases RBM7-RNA-binding and subsequently the RNA exosome degradation activities, thereby modulating the turnover of non-coding transcriptome. Participates in DNA damage response (DDR), through its interaction with MEPCE and LARP7, the core subunits of 7SK snRNP complex, that release the positive transcription elongation factor b (P-TEFb) complex from the 7SK snRNP. In turn, activation of P-TEFb complex induces the transcription of P-TEFb-dependent DDR genes to promote cell viability. In Homo sapiens (Human), this protein is RNA-binding protein 7.